The following is a 96-amino-acid chain: Fruit-specific protein (96 aa).

Intrachain disulfides connect cysteine 59/cysteine 75, cysteine 63/cysteine 78, and cysteine 69/cysteine 92.

In terms of tissue distribution, fruit specific.

The chain is Fruit-specific protein (2A11) from Solanum lycopersicum (Tomato).